A 733-amino-acid polypeptide reads, in one-letter code: Envelope glycoprotein H (733 aa).

Residues 1–14 form the signal peptide; the sequence is MLFLILLCVTGAQA. At 15–707 the chain is on the virion surface side; the sequence is ITTPAPPRPA…LYANRAMNII (693 aa). N-linked (GlcNAc...) asparagine; by host glycosylation is found at asparagine 78 and asparagine 119. The interval 185 to 249 is interaction with gL; the sequence is GAYQLAGMAT…NSDAEELLLL (65 aa). N-linked (GlcNAc...) asparagine; by host glycans are attached at residues asparagine 266, asparagine 431, asparagine 561, asparagine 573, asparagine 612, asparagine 627, and asparagine 689. The helical transmembrane segment at 708 to 728 threads the bilayer; the sequence is IILLFTIAALAGVFIVYKIVM. The Intravirion portion of the chain corresponds to 729–733; the sequence is YMTFK.

This sequence belongs to the herpesviridae glycoprotein H family. As to quaternary structure, interacts with glycoprotein L (gL); this interaction is necessary for the correct processing and cell surface expression of gH. The heterodimer gH/gL seems to interact with gB trimers during fusion. Post-translationally, N-glycosylated, O-glycosylated, and sialylated.

It is found in the virion membrane. It localises to the host cell membrane. Its subcellular location is the host endosome membrane. Functionally, the heterodimer glycoprotein H-glycoprotein L is required for the fusion of viral and plasma membranes leading to virus entry into the host cell. Following initial binding to host receptor, membrane fusion is mediated by the fusion machinery composed of gB and the heterodimer gH/gL. May also be involved in the fusion between the virion envelope and the outer nuclear membrane during virion morphogenesis. The sequence is that of Envelope glycoprotein H from Alcelaphine herpesvirus 1 (strain C500) (AlHV-1).